Here is a 274-residue protein sequence, read N- to C-terminus: MISVMADEKHKEYFKLYYFQYMIIGLCTILFLYSEISLVPRGQNIEFSLDDPSISKRYVPNELVGPLECLILSVGLSNMVVFWTCMFDKDLLKKNRVKRLRERPDGISNDFHFMHTSILCLMLIISINAALTGALKLIIGNLRPDFVDRCIPDLQKMSDSDSLVFGLDICKQTNKWILYEGLKSTPSGHSSFIVSTMGFTYLWQRVFTTRNTRSCIWCPLLALVVMVSRVIDHRHHWYDVVSGAVLAFLVIYCCWKWTFTNLAKRDILPSPVSV.

Residues Met-1–Lys-15 are Lumenal-facing. The chain crosses the membrane as a helical span at residues Leu-16–Tyr-33. Over Ser-34–Cys-69 the chain is Cytoplasmic. The chain crosses the membrane as a helical span at residues Leu-70–Phe-87. Residues Asp-88 to Ser-117 lie on the Lumenal side of the membrane. A helical membrane pass occupies residues Ile-118–Ile-139. A phosphatase sequence motif I region spans residues Lys-136–Pro-144. Over Gly-140–His-189 the chain is Cytoplasmic. Positions Pro-186–His-189 are phosphatase sequence motif II. Residues Ser-190–Trp-203 traverse the membrane as a helical segment. Over Gln-204–Ser-214 the chain is Lumenal. The chain crosses the membrane as a helical span at residues Cys-215–Ile-231. The interval Ser-228 to Asp-239 is phosphatase sequence motif III. Topologically, residues Asp-232–Trp-237 are cytoplasmic. A helical transmembrane segment spans residues Tyr-238 to Trp-255. Over Lys-256–Val-274 the chain is Lumenal.

It belongs to the PA-phosphatase related phosphoesterase family.

It is found in the golgi apparatus membrane. It catalyses the reaction a 1,2-diacyl-sn-glycerol 3-diphosphate + H2O = a 1,2-diacyl-sn-glycero-3-phosphate + phosphate + H(+). The catalysed reaction is a 1,2-diacyl-sn-glycero-3-phosphate + H2O = a 1,2-diacyl-sn-glycerol + phosphate. It carries out the reaction a 1-acyl-sn-glycero-3-phosphate + H2O = a 1-acyl-sn-glycerol + phosphate. With respect to regulation, PA phosphatase activity is magnesium ion-independent and potently inhibited by N-ethylmaleimide. Also inhibited by phenylglyoxal and propranolol. Its function is as follows. Catalyzes the dephosphorylation of diacylglycerol diphosphate (DGPP) to phosphatidate (PA) and the subsequent dephosphorylation of PA to diacylglycerol (DAG). Together with DPP1, regulates intracellular DGPP and PA levels which are phospholipid molecules believed to play a signaling role in stress response. Can also use lysophosphatidic acid (LPA) as a substrate. Substrate preference is PA &gt; DGPP &gt; LPA. This Saccharomyces cerevisiae (strain ATCC 204508 / S288c) (Baker's yeast) protein is Lipid phosphate phosphatase 1 (LPP1).